Here is a 173-residue protein sequence, read N- to C-terminus: Ribulose bisphosphate carboxylase small subunit, chloroplastic 1 (173 aa).

A chloroplast-targeting transit peptide spans 1-52 (MMVSTAAVARVRPAQTNMVGAFNGCRSSVAFPATRKANNDLSTLPSSGGRVS).

The protein belongs to the RuBisCO small chain family. Heterohexadecamer of 8 large and 8 small subunits.

Its subcellular location is the plastid. The protein localises to the chloroplast. RuBisCO catalyzes two reactions: the carboxylation of D-ribulose 1,5-bisphosphate, the primary event in carbon dioxide fixation, as well as the oxidative fragmentation of the pentose substrate. Both reactions occur simultaneously and in competition at the same active site. Although the small subunit is not catalytic it is essential for maximal activity. This chain is Ribulose bisphosphate carboxylase small subunit, chloroplastic 1, found in Lemna gibba (Swollen duckweed).